We begin with the raw amino-acid sequence, 251 residues long: Prothoracicostatic peptides (251 aa).

A disordered region spans residues 1–22; the sequence is MRKSARGQVCTEAGAGASGDWQ. The propeptide occupies 1 to 77; that stretch reads MRKSARGQVC…GWQDLNSAWG (77 aa). The residue at position 89 (W89) is a Tryptophan amide. Residues 93-138 constitute a propeptide that is removed on maturation; the sequence is GWNDMSSAWGKRGWNDMSSAWGKRGWNDMSSAWGKRGWNDMSSAWG. W152 is subject to Tryptophan amide. Residues 156 to 187 constitute a propeptide that is removed on maturation; sequence AAEPDYEEIDAAIEQLIPIQQLSDNERMEVPE. W198 and W228 each carry tryptophan amide. The tract at residues 227–251 is disordered; sequence MWGKRSAPDADAVDDDHESSARDEA.

In terms of tissue distribution, prothoracicostatic peptide 5: Expressed in antennal lobe (AL), corpora cardiaca (CC), corpora allata (CA) and gnathal ganglion (GNG) (at protein level). Expression in AL detected in all animals, in CC, CA and GNG in most (at protein level). Prothoracicostatic peptide 6: Expressed in antennal lobe (AL), corpora cardiaca (CC), corpora allata (CA) and gnathal ganglion (GNG) (at protein level). Expression in AL detected in all animals, expression in GNG in most animals, in CA and CC detected in some animals (at protein level). Prothoracicostatic peptide 7: Expressed in antennal lobe (AL), corpora cardiaca (CC), corpora allata (CA) and gnathal ganglion (GNG) (at protein level). Expression in AL, CA and CC detected in most animals, expression in GNG in some animals (at protein level). Prothoracicostatic peptide precursor-related peptide 2: Expressed in antennal lobe (AL), corpora cardiaca (CC) and corpora allata (CA) with expression detected in few animals (at protein level). Not expressed in gnathal ganglion (GNG) (at protein level). Prothoracicostatic peptide 8: Expressed in antennal lobe (AL), corpora cardiaca (CC), corpora allata (CA) and gnathal ganglion (GNG) (at protein level). Expression in AL detected in all animals, expression in GNG in most animals, in CA and CC detected in some animals (at protein level). Prothoracicostatic peptide precursor-related peptide 3: Expressed in antennal lobe (AL) in few animals (at protein level). Not expressed in corpora cardiaca (CC), corpora allata (CA) and gnathal ganglion (GNG) (at protein level).

The protein localises to the secreted. This chain is Prothoracicostatic peptides, found in Agrotis ipsilon (Black cutworm moth).